The chain runs to 202 residues: Recombination protein RecR (202 aa).

The segment at 56–71 (CVVCGTVSDGELCRIC) adopts a C4-type zinc-finger fold. The 101-residue stretch at 79 to 179 (TMICVVEEPK…TVTRLASGLP (101 aa)) folds into the Toprim domain.

It belongs to the RecR family.

May play a role in DNA repair. It seems to be involved in an RecBC-independent recombinational process of DNA repair. It may act with RecF and RecO. The protein is Recombination protein RecR of Nocardia farcinica (strain IFM 10152).